We begin with the raw amino-acid sequence, 369 residues long: Histidinol-phosphate aminotransferase 2 (369 aa).

Residue Lys231 is modified to N6-(pyridoxal phosphate)lysine.

This sequence belongs to the class-II pyridoxal-phosphate-dependent aminotransferase family. Histidinol-phosphate aminotransferase subfamily. In terms of assembly, homodimer. It depends on pyridoxal 5'-phosphate as a cofactor.

The enzyme catalyses L-histidinol phosphate + 2-oxoglutarate = 3-(imidazol-4-yl)-2-oxopropyl phosphate + L-glutamate. The protein operates within amino-acid biosynthesis; L-histidine biosynthesis; L-histidine from 5-phospho-alpha-D-ribose 1-diphosphate: step 7/9. This chain is Histidinol-phosphate aminotransferase 2, found in Legionella pneumophila (strain Lens).